Here is a 781-residue protein sequence, read N- to C-terminus: Arf-GAP with coiled-coil, ANK repeat and PH domain-containing protein 2 (781 aa).

Positions 1–226 (MKVTVDFEEC…MKDLGAQLDQ (226 aa)) constitute a BAR domain. In terms of domain architecture, PH spans 266 to 361 (GIVMEGYLFK…WIKAVQTSIA (96 aa)). The segment covering 365-378 (REKGDESEKQEKKS) has biased composition (basic and acidic residues). Residues 365–390 (REKGDESEKQEKKSSPSTGSLESGSE) form a disordered region. Positions 379-388 (SPSTGSLESG) are enriched in low complexity. One can recognise an Arf-GAP domain in the interval 399–521 (ESALQRVQCI…KFVEKQPAAA (123 aa)). The C4-type zinc finger occupies 414–437 (CCDCGLADPRWASINLGITLCIEC). Positions 520–576 (AAVSPLESRTKVLPQSQEEKRHSAPEKSFLAIEQGAASPRVRSSDSGIQQSVDDSRE) are disordered. ANK repeat units follow at residues 642–671 (NKAT…NVNI), 675–704 (KGRG…NQHA), and 708–737 (DGKD…NEEM).

The protein localises to the endosome membrane. It is found in the cell membrane. GAP activity stimulated by phosphatidylinositol 4,5-bisphosphate (PIP2) and phosphatidic acid. GTPase-activating protein (GAP) for ADP ribosylation factor 6 (ARF6). In Gallus gallus (Chicken), this protein is Arf-GAP with coiled-coil, ANK repeat and PH domain-containing protein 2 (ACAP2).